A 360-amino-acid polypeptide reads, in one-letter code: Aminomethyltransferase (360 aa).

This sequence belongs to the GcvT family. The glycine cleavage system is composed of four proteins: P, T, L and H.

It catalyses the reaction N(6)-[(R)-S(8)-aminomethyldihydrolipoyl]-L-lysyl-[protein] + (6S)-5,6,7,8-tetrahydrofolate = N(6)-[(R)-dihydrolipoyl]-L-lysyl-[protein] + (6R)-5,10-methylene-5,6,7,8-tetrahydrofolate + NH4(+). Its function is as follows. The glycine cleavage system catalyzes the degradation of glycine. The sequence is that of Aminomethyltransferase from Exiguobacterium sibiricum (strain DSM 17290 / CCUG 55495 / CIP 109462 / JCM 13490 / 255-15).